Here is a 122-residue protein sequence, read N- to C-terminus: Protein MGF 100-1R (122 aa).

It belongs to the asfivirus MGF 100 family.

Its function is as follows. Plays a role in virus cell tropism, and may be required for efficient virus replication in macrophages. The chain is Protein MGF 100-1R from Ornithodoros (relapsing fever ticks).